Reading from the N-terminus, the 572-residue chain is Mitochondrial distribution and morphology protein 34 (572 aa).

One can recognise an SMP-LTD domain in the interval 1–195; the sequence is MAFNFNWSPL…LPAIIHRLSL (195 aa). Disordered regions lie at residues 212-236, 321-426, 477-522, and 553-572; these read TASA…VDAL, VGSM…PDND, SATP…DNPT, and CGPF…AYGH. Low complexity predominate over residues 330-348; that stretch reads SASMVSSQSRSSTPSHTFS. Positions 358–370 are enriched in basic residues; the sequence is RHSKAHARKRKKR. The span at 371-381 shows a compositional bias: basic and acidic residues; sequence VVDLRRPKTTD. Polar residues-rich tracts occupy residues 387-400 and 500-511; these read SDES…SAPS and DSSAGSSRQLPS.

It belongs to the MDM34 family. Component of the ER-mitochondria encounter structure (ERMES) or MDM complex, composed of mmm1, mdm10, mdm12 and mdm34.

The protein resides in the mitochondrion outer membrane. Its function is as follows. Component of the ERMES/MDM complex, which serves as a molecular tether to connect the endoplasmic reticulum (ER) and mitochondria. Components of this complex are involved in the control of mitochondrial shape and protein biogenesis, and function in nonvesicular lipid trafficking between the ER and mitochondria. Mdm34 is required for the interaction of the ER-resident membrane protein mmm1 and the outer mitochondrial membrane-resident beta-barrel protein mdm10. In Aspergillus fumigatus (strain CBS 144.89 / FGSC A1163 / CEA10) (Neosartorya fumigata), this protein is Mitochondrial distribution and morphology protein 34.